Reading from the N-terminus, the 415-residue chain is Protein-lysine N-trimethyltransferase SMYD5 (415 aa).

The SET domain maps to 20–351 (NCVDVRFINN…PGEEICISYL (332 aa)). An MYND-type zinc finger spans residues 95–135 (PHPELCKVRPDRHQACPQCQVMYCSSECRQAAMDQYHKILC). Y350 contributes to the S-adenosyl-L-methionine binding site. Residues 388–415 (DMTSEDEEEVEGEGETEGEDMEDEMTDV) form a disordered region.

It belongs to the class V-like SAM-binding methyltransferase superfamily. As to expression, expressed at high levels in the ovary and at lower levels in the fin, testis and brain.

The protein localises to the cytoplasm. It carries out the reaction L-lysyl-[protein] + 3 S-adenosyl-L-methionine = N(6),N(6),N(6)-trimethyl-L-lysyl-[protein] + 3 S-adenosyl-L-homocysteine + 3 H(+). It catalyses the reaction L-lysyl(20)-[histone H4] + 3 S-adenosyl-L-methionine = N(6),N(6),N(6)-trimethyl-L-lysyl(20)-[histone H4] + 3 S-adenosyl-L-homocysteine + 3 H(+). The enzyme catalyses L-lysyl(36)-[histone H3] + 3 S-adenosyl-L-methionine = N(6),N(6),N(6)-trimethyl-L-lysyl(36)-[histone H3] + 3 S-adenosyl-L-homocysteine + 3 H(+). In terms of biological role, protein-lysine N-trimethyltransferase that specifically catalyzes trimethylation of 'Lys-22' of the RPL40/eL40 subunit of the 60S ribosome, thereby promoting translation elongation and protein synthesis. May also act as a histone methyltransferase in the context of histone octamers, but not on nucleosome substrates: trimethylates 'Lys-36' of histone H3 and 'Lys-20' of histone H4 to form H3K36me3 and H4K20me3, respectively. The histone methyltransferase activity, which is independent of its SET domain, is however unsure in vivo. Plays a crucial role in hematopoiesis during embryogenesis by negatively regulating expression of genes related to both primitive and definitive hematopoiesis. The protein is Protein-lysine N-trimethyltransferase SMYD5 of Danio rerio (Zebrafish).